Reading from the N-terminus, the 199-residue chain is Recombination protein RecR (199 aa).

The segment at 58–73 (CKVCTNLTDQEVCNIC) adopts a C4-type zinc-finger fold. Residues 81-176 (LLICVVEDPR…KVSRIAHGIP (96 aa)) enclose the Toprim domain.

The protein belongs to the RecR family.

May play a role in DNA repair. It seems to be involved in an RecBC-independent recombinational process of DNA repair. It may act with RecF and RecO. The polypeptide is Recombination protein RecR (Alkaliphilus oremlandii (strain OhILAs) (Clostridium oremlandii (strain OhILAs))).